Consider the following 56-residue polypeptide: Alpha-conotoxin Pn1.2 (56 aa).

Positions 1 to 16 are cleaved as a signal peptide; that stretch reads MFTVFLLVVLATTVVS. Positions 17 to 39 are excised as a propeptide; that stretch reads FTSDRASDGGNAAMSDLIALTIK. Intrachain disulfides connect Cys41/Cys47 and Cys42/Cys55. Residues 43–45 form a ser-Xaa-Pro motif, crucial for potent interaction with nAChR region; it reads SHP. At Cys55 the chain carries Cysteine amide.

It belongs to the conotoxin A superfamily. In terms of processing, non-native isomers 'ribbon' (with disulfide connectivity C1-C4; C2-C3) and 'beads' (with disulfide connectivity C1-C2; C3-C4) also inhibit high voltage-activated (HVA) calcium channel currents in rat DRG neurons (20-30% inhibition at 1 uM toxin). Expressed by the venom duct.

It is found in the secreted. Functionally, alpha-conotoxins act on postsynaptic membranes, they bind to the nicotinic acetylcholine receptors (nAChR) and thus inhibit them. This toxin inhibits human alpha-7/CHRNA7 and alpha-9-alpha-10/CHRNA9/CHRNA10 AChR (complete inhibition at 3 uM of toxin). In addition, this toxin inhibits high voltage-activated (HVA) calcium channel currents in rat DRG neurons (22% inhibition at 1 uM toxin) probably by activating GABA(B) receptors (GABBR1 and/or GABBR2). This Conus pennaceus (Feathered cone) protein is Alpha-conotoxin Pn1.2.